The sequence spans 121 residues: Large ribosomal subunit protein uL24 (121 aa).

It belongs to the universal ribosomal protein uL24 family. As to quaternary structure, part of the 50S ribosomal subunit.

In terms of biological role, one of two assembly initiator proteins, it binds directly to the 5'-end of the 23S rRNA, where it nucleates assembly of the 50S subunit. Functionally, located at the polypeptide exit tunnel on the outside of the subunit. This chain is Large ribosomal subunit protein uL24, found in Pyrococcus abyssi (strain GE5 / Orsay).